The following is a 160-amino-acid chain: Small ribosomal subunit protein uS7 (160 aa).

Belongs to the universal ribosomal protein uS7 family. Part of the 30S ribosomal subunit. Contacts proteins S9 and S11.

Its function is as follows. One of the primary rRNA binding proteins, it binds directly to 16S rRNA where it nucleates assembly of the head domain of the 30S subunit. Is located at the subunit interface close to the decoding center, probably blocks exit of the E-site tRNA. The polypeptide is Small ribosomal subunit protein uS7 (Rickettsia akari (strain Hartford)).